The chain runs to 203 residues: Hydra actinoporin-like toxin 2 (203 aa).

The signal sequence occupies residues 1–21 (MLSYLCFGCFLVSASLEIACG). A Cell attachment site motif is present at residues 175–177 (RGG).

Belongs to the actinoporin family. HALT subfamily. As to quaternary structure, octamer or nonamer in membranes. Monomer in the soluble state. In vitro, interacts with folate receptor alpha (of target organism). In terms of tissue distribution, strongly expressed in the gland and mucous cells in the endoderm.

It is found in the nematocyst. It localises to the secreted. The protein resides in the target cell membrane. Pore-forming protein that forms hydrophilic pores and causes cytolysis. Compared to equinatoxin-2 (AC P61914), it reveals lower cytolysis activity (5-12-fold difference, tested on erythrocytes), a larger pore size (probably 2-3 nm) and different affinity to membrane lipids (100-fold lower affinity to sphingomyelin). Binds to sulfatides (SFT). Shows cytolytic activity on HeLa cells, with a different potency than its paralogs (from most potent to less potent: HALT-4&gt;HALT-6~HALT-1&gt;HALT-3&gt;HALT-7&gt;HALT-2). Pore formation is a multi-step process that involves specific recognition of membrane lipid by a protein aromatic residues rich region, firm binding to the membrane (mainly driven by hydrophobic interactions) accompanied by the transfer of the N-terminal region to the lipid-water interface and finally pore formation after oligomerization of monomers. In vitro, binds to the folate receptor alpha (FOLR1), a GPI-anchored membrane protein that plays a major role in the uptake of folate/folic acid into cells via endocytosis, suggesting a possible involvement of this receptor in the mechanism of HALT-1-induced cell lysis. In vivo, does not cause visible paralysis in larvae of the blowfly Sarcophaga faculata, the most common arthropod prey of Hydra. In Hydra vulgaris (Hydra), this protein is Hydra actinoporin-like toxin 2.